The chain runs to 371 residues: Fructose-1,6-bisphosphatase class 1 1 (371 aa).

The Mg(2+) site is built by E115, D134, L136, and D137. Substrate contacts are provided by residues 137-140, N228, and 280-282; these read DGSS and YLY. E300 is a binding site for Mg(2+).

The protein belongs to the FBPase class 1 family. As to quaternary structure, homotetramer. Mg(2+) is required as a cofactor.

It localises to the cytoplasm. It carries out the reaction beta-D-fructose 1,6-bisphosphate + H2O = beta-D-fructose 6-phosphate + phosphate. It participates in carbohydrate biosynthesis; gluconeogenesis. In Xanthobacter autotrophicus (strain ATCC BAA-1158 / Py2), this protein is Fructose-1,6-bisphosphatase class 1 1.